The primary structure comprises 94 residues: Co-chaperonin GroES (94 aa).

Heptamer of 7 subunits arranged in a ring. Interacts with the chaperonin GroEL.

The protein resides in the cytoplasm. Functionally, together with the chaperonin GroEL, plays an essential role in assisting protein folding. The GroEL-GroES system forms a nano-cage that allows encapsulation of the non-native substrate proteins and provides a physical environment optimized to promote and accelerate protein folding. GroES binds to the apical surface of the GroEL ring, thereby capping the opening of the GroEL channel. The chain is Co-chaperonin GroES from Thermoanaerobacter brockii (Thermoanaerobium brockii).